The following is an 871-amino-acid chain: Scavenger receptor class F member 2 (871 aa).

Residues 1 to 20 (MEGAGPRGAGPARRRGAGGP) form a disordered region. Positions 1–43 (MEGAGPRGAGPARRRGAGGPPSPLLPSLLLLLLLWMLPDTVAP) are cleaved as a signal peptide. The Extracellular segment spans residues 44–441 (QELNPRGRNV…ACHLETNQRK (398 aa)). EGF-like domains are found at residues 71-110 (QGDE…ANCD), 122-153 (CKEL…ARCE), 148-182 (WGAR…AQCA), 183-212 (SACY…RSCN), 213-241 (NQCA…ARCD), and 236-270 (FGAR…KYCR). 18 disulfide bridges follow: Cys-75-Cys-86, Cys-80-Cys-98, Cys-100-Cys-109, Cys-126-Cys-134, Cys-128-Cys-141, Cys-143-Cys-152, Cys-156-Cys-163, Cys-158-Cys-170, Cys-172-Cys-181, Cys-185-Cys-193, Cys-187-Cys-200, Cys-202-Cys-211, Cys-215-Cys-222, Cys-217-Cys-229, Cys-231-Cys-240, Cys-244-Cys-251, Cys-246-Cys-258, and Cys-260-Cys-269. A glycan (N-linked (GlcNAc...) asparagine) is linked at Asn-83. N-linked (GlcNAc...) asparagine glycans are attached at residues Asn-310 and Asn-365. Positions 372–403 (CAFVCADCGSGHCDFQSGRCLCSPGVHGPHCN) constitute an EGF-like 7 domain. 3 disulfide bridges follow: Cys-376-Cys-384, Cys-379-Cys-391, and Cys-393-Cys-402. A glycan (N-linked (GlcNAc...) asparagine) is linked at Asn-403. The chain crosses the membrane as a helical span at residues 442–462 (GVMGAGALLVLLVCLLLSLLG). Topologically, residues 463–871 (CCCACRGKDP…ELGRAGAPTL (409 aa)) are cytoplasmic. Ser-551 carries the phosphoserine modification. Residues 570 to 579 (EAPAESRDPE) are compositionally biased toward basic and acidic residues. A disordered region spans residues 570–871 (EAPAESRDPE…ELGRAGAPTL (302 aa)). Ser-613 carries the post-translational modification Phosphoserine. Tyr-628 is modified (phosphotyrosine). Over residues 632 to 643 (ARREARPARARG) the composition is skewed to basic and acidic residues. A phosphoserine mark is found at Ser-651, Ser-653, Ser-710, Ser-718, and Ser-742. Positions 705–725 (TPSDKSAHTVEHGSPRTRDPT) are enriched in basic and acidic residues. The span at 821–831 (PPATETPGPEK) shows a compositional bias: low complexity. A compositionally biased stretch (basic residues) spans 844 to 856 (KKTPIQKPPRKKS). Positions 861–871 (GELGRAGAPTL) are enriched in low complexity.

As to quaternary structure, homophilic and heterophilic interaction via its extracellular domain. Interacts with SCARF1. The heterophilic interaction with SCARF1, which is stronger than the homophilic interaction with itself, is suppressed by the presence of SCARF1 ligand such as Ac-LDL. Predominantly expressed in endothelial cells. Expressed in heart, placenta, lung, kidney, spleen, small intestine and ovary.

Its subcellular location is the membrane. Probable adhesion protein, which mediates homophilic and heterophilic interactions. In contrast to SCARF1, it poorly mediates the binding and degradation of acetylated low density lipoprotein (Ac-LDL). The chain is Scavenger receptor class F member 2 (SCARF2) from Homo sapiens (Human).